We begin with the raw amino-acid sequence, 368 residues long: tRNA 2-selenouridine synthase (368 aa).

The region spanning 15–138 is the Rhodanese domain; sequence MLSGHPMIDV…MRQYLIEVID (124 aa). The active-site S-selanylcysteine intermediate is the Cys98.

Belongs to the SelU family. Monomer.

The enzyme catalyses 5-methylaminomethyl-2-thiouridine(34) in tRNA + selenophosphate + (2E)-geranyl diphosphate + H2O + H(+) = 5-methylaminomethyl-2-selenouridine(34) in tRNA + (2E)-thiogeraniol + phosphate + diphosphate. The catalysed reaction is 5-methylaminomethyl-2-thiouridine(34) in tRNA + (2E)-geranyl diphosphate = 5-methylaminomethyl-S-(2E)-geranyl-thiouridine(34) in tRNA + diphosphate. It catalyses the reaction 5-methylaminomethyl-S-(2E)-geranyl-thiouridine(34) in tRNA + selenophosphate + H(+) = 5-methylaminomethyl-2-(Se-phospho)selenouridine(34) in tRNA + (2E)-thiogeraniol. It carries out the reaction 5-methylaminomethyl-2-(Se-phospho)selenouridine(34) in tRNA + H2O = 5-methylaminomethyl-2-selenouridine(34) in tRNA + phosphate. Functionally, involved in the post-transcriptional modification of the uridine at the wobble position (U34) of tRNA(Lys), tRNA(Glu) and tRNA(Gln). Catalyzes the conversion of 2-thiouridine (S2U-RNA) to 2-selenouridine (Se2U-RNA). Acts in a two-step process involving geranylation of 2-thiouridine (S2U) to S-geranyl-2-thiouridine (geS2U) and subsequent selenation of the latter derivative to 2-selenouridine (Se2U) in the tRNA chain. The sequence is that of tRNA 2-selenouridine synthase from Shewanella woodyi (strain ATCC 51908 / MS32).